A 325-amino-acid polypeptide reads, in one-letter code: tRNA N6-adenosine threonylcarbamoyltransferase (325 aa).

Fe cation is bound by residues H107, H111, and Y127. Substrate is bound by residues 127 to 131 (YVSGG), D159, G172, E176, and N257. Position 285 (D285) interacts with Fe cation.

Belongs to the KAE1 / TsaD family. As to quaternary structure, monomer. Component of the KEOPS complex that consists of Kae1, Bud32, Cgi121 and Pcc1; the whole complex dimerizes. Requires Fe(2+) as cofactor.

The protein localises to the cytoplasm. It carries out the reaction L-threonylcarbamoyladenylate + adenosine(37) in tRNA = N(6)-L-threonylcarbamoyladenosine(37) in tRNA + AMP + H(+). Required for the formation of a threonylcarbamoyl group on adenosine at position 37 (t(6)A37) in tRNAs that read codons beginning with adenine. Is a component of the KEOPS complex that is probably involved in the transfer of the threonylcarbamoyl moiety of threonylcarbamoyl-AMP (TC-AMP) to the N6 group of A37. Kae1 likely plays a direct catalytic role in this reaction, but requires other protein(s) of the complex to fulfill this activity. In Thermococcus kodakarensis (strain ATCC BAA-918 / JCM 12380 / KOD1) (Pyrococcus kodakaraensis (strain KOD1)), this protein is tRNA N6-adenosine threonylcarbamoyltransferase.